The primary structure comprises 1039 residues: Serine/threonine-protein kinase Tao (1039 aa).

The Protein kinase domain maps to 27–280; that stretch reads FEDLREIGHG…SAKLLTHAYV (254 aa). Residues 33 to 41 and K56 contribute to the ATP site; that span reads IGHGSFGAV. Catalysis depends on D150, which acts as the Proton acceptor. Disordered stretches follow at residues 324 to 457, 485 to 508, 629 to 648, and 677 to 707; these read SAVG…NSAS, GGGGTGTGGSGGGSPASGGPLADR, HQQDVERRAKQTSAAEKKLH, and WKRELSMDESTPKRQRDLTLQSQKDNLKQHE. The span at 341-350 shows a compositional bias: polar residues; it reads SSKSNSITSE. Positions 359-376 are enriched in low complexity; it reads SAASSQSSSSNSIPAAAQ. The span at 377–387 shows a compositional bias: basic residues; that stretch reads NHHHIAAHHHQ. 2 stretches are compositionally biased toward low complexity: residues 388–397 and 413–429; these read QAASAAVAAA and PSGQQGQPVPPGAVSRN. A compositionally biased stretch (polar residues) spans 444-454; the sequence is HSMNNNVTPTN. Gly residues predominate over residues 485–500; sequence GGGGTGTGGSGGGSPA. Coiled-coil stretches lie at residues 631–765 and 835–993; these read QDVE…MLLK and KQFR…DNES. A compositionally biased stretch (basic and acidic residues) spans 677–693; the sequence is WKRELSMDESTPKRQRD.

The protein belongs to the protein kinase superfamily. STE Ser/Thr protein kinase family. STE20 subfamily. In terms of assembly, interacts with Schip1; the interaction enhances Tao kinase activity. Requires Mg(2+) as cofactor. Post-translationally, autophosphorylated. In the posterior midgut, expressed in almost all intestinal cell types including intestinal stem cells and enterocytes (at protein level). Maternally expressed, ubiquitously distributed in the egg and early embryo and enriched in the germ plasm at the posterior pole of the early embryo including the pole cells.

The protein localises to the cytoplasm. It localises to the cytoskeleton. The protein resides in the spindle. It is found in the membrane. Its subcellular location is the perikaryon. The protein localises to the cell cortex. It localises to the cell projection. The protein resides in the axon. The catalysed reaction is L-seryl-[protein] + ATP = O-phospho-L-seryl-[protein] + ADP + H(+). It catalyses the reaction L-threonyl-[protein] + ATP = O-phospho-L-threonyl-[protein] + ADP + H(+). In terms of biological role, serine/threonine-protein kinase which regulates the Hippo/SWH (Sav/Wts/Hpo) signaling pathway, a signaling pathway that plays a pivotal role in organ size control and tumor suppression by restricting proliferation and promoting apoptosis. The core of this pathway is composed of a kinase cascade wherein Hippo (hpo), in complex with its regulatory protein Salvador (sav), phosphorylates and activates Warts (wts) in complex with its regulatory protein Mats, which in turn phosphorylates and inactivates the Yorkie (yki) oncoprotein. In imaginal cells, phosphorylates and activates hpo and leads to repression of yki. In the midgut, negatively regulates the proliferation of intestinal stem cells through the Hippo/SWH pathway. Independent of the hippo/SWH pathway, regulates epithelial morphogenesis in follicle cells by promoting the endocytosis of Fas2 and reducing lateral adhesion between epithelial cells which, in turn, permits shrinking of the lateral membrane and initiates morphogenesis of the squamous epithelium. Required for the development of both the mushroom body and the ellipsoid body in the brain and may act as a negative regulator of the par-1 kinase. Negatively regulates the JNK pathway which increases sensitivity to ethanol exposure. Plays a role in the control of cell shape by negatively regulating the growth of microtubule plus-ends as they contact the actin-rich cell cortex. Required for the induction of apoptosis in pole cells by promoting expression of skl which enhances activity of the apoptosis activator hid. Its function is as follows. Induces in vitro expression of large, highly dynamic, microtubule-dependent lamellopodia-like cytoplasmic expansions which constantly probe the environment. Functionally, induces in vitro expression of actin-dependent filopodia-like cytoplasmic protrusions which firmly attach to the substrate. Antagonizes the activity of isoform D. In Drosophila melanogaster (Fruit fly), this protein is Serine/threonine-protein kinase Tao.